A 78-amino-acid chain; its full sequence is Acyl carrier protein (78 aa).

Positions 2–77 constitute a Carrier domain; it reads SDTADRVKKI…DAIKYIDENK (76 aa). Position 37 is an O-(pantetheine 4'-phosphoryl)serine (serine 37).

It belongs to the acyl carrier protein (ACP) family. 4'-phosphopantetheine is transferred from CoA to a specific serine of apo-ACP by AcpS. This modification is essential for activity because fatty acids are bound in thioester linkage to the sulfhydryl of the prosthetic group.

It localises to the cytoplasm. Its pathway is lipid metabolism; fatty acid biosynthesis. In terms of biological role, carrier of the growing fatty acid chain in fatty acid biosynthesis. This is Acyl carrier protein from Novosphingobium aromaticivorans (strain ATCC 700278 / DSM 12444 / CCUG 56034 / CIP 105152 / NBRC 16084 / F199).